Reading from the N-terminus, the 144-residue chain is Putative lipoprotein MAH_0816 (144 aa).

Positions 1–24 (MRWPMQNRTTAVIAVALATTALVA) are cleaved as a signal peptide. C25 carries the N-palmitoyl cysteine lipid modification. Residue C25 is the site of S-diacylglycerol cysteine attachment.

The protein belongs to the mycobacterial 19 kDa antigen family.

The protein localises to the cell membrane. The chain is Putative lipoprotein MAH_0816 from Mycobacterium avium subsp. hominissuis (strain TH135).